The following is a 410-amino-acid chain: Tryptophan synthase beta chain (410 aa).

Lys-99 is modified (N6-(pyridoxal phosphate)lysine).

Belongs to the TrpB family. Tetramer of two alpha and two beta chains. Requires pyridoxal 5'-phosphate as cofactor.

The catalysed reaction is (1S,2R)-1-C-(indol-3-yl)glycerol 3-phosphate + L-serine = D-glyceraldehyde 3-phosphate + L-tryptophan + H2O. It functions in the pathway amino-acid biosynthesis; L-tryptophan biosynthesis; L-tryptophan from chorismate: step 5/5. Functionally, the beta subunit is responsible for the synthesis of L-tryptophan from indole and L-serine. The sequence is that of Tryptophan synthase beta chain from Pseudomonas fluorescens (strain Pf0-1).